Consider the following 577-residue polypeptide: Arginine--tRNA ligase (577 aa).

The 'HIGH' region motif lies at 122-132; that stretch reads PNVAKEMHVGH.

This sequence belongs to the class-I aminoacyl-tRNA synthetase family. As to quaternary structure, monomer.

Its subcellular location is the cytoplasm. The catalysed reaction is tRNA(Arg) + L-arginine + ATP = L-arginyl-tRNA(Arg) + AMP + diphosphate. This Escherichia coli O9:H4 (strain HS) protein is Arginine--tRNA ligase.